The sequence spans 329 residues: DNA-directed RNA polymerase subunit alpha (329 aa).

Residues 1-234 form an alpha N-terminal domain (alpha-NTD) region; the sequence is MQGSVTEFLK…EQLDAFVELR (234 aa). The alpha C-terminal domain (alpha-CTD) stretch occupies residues 248–329; the sequence is FDPILLRPVD…WPPASLADDL (82 aa).

This sequence belongs to the RNA polymerase alpha chain family. Homodimer. The RNAP catalytic core consists of 2 alpha, 1 beta, 1 beta' and 1 omega subunit. When a sigma factor is associated with the core the holoenzyme is formed, which can initiate transcription.

The catalysed reaction is RNA(n) + a ribonucleoside 5'-triphosphate = RNA(n+1) + diphosphate. DNA-dependent RNA polymerase catalyzes the transcription of DNA into RNA using the four ribonucleoside triphosphates as substrates. This is DNA-directed RNA polymerase subunit alpha from Shewanella sp. (strain ANA-3).